The chain runs to 549 residues: Probable protein kinase UbiB (549 aa).

Positions Asp123 to Leu501 constitute a Protein kinase domain. ATP contacts are provided by residues Leu129–Val137 and Lys152. Catalysis depends on Asp287, which acts as the Proton acceptor. The next 2 membrane-spanning stretches (helical) occupy residues Ser498–Gln518 and Ala520–Trp540.

It belongs to the ABC1 family. UbiB subfamily.

Its subcellular location is the cell inner membrane. Its pathway is cofactor biosynthesis; ubiquinone biosynthesis [regulation]. Its function is as follows. Is probably a protein kinase regulator of UbiI activity which is involved in aerobic coenzyme Q (ubiquinone) biosynthesis. The protein is Probable protein kinase UbiB of Shewanella sp. (strain ANA-3).